Consider the following 263-residue polypeptide: Hydroxyethylthiazole kinase (263 aa).

Residue Met41 participates in substrate binding. 2 residues coordinate ATP: Arg117 and Thr163. Gly190 contacts substrate.

Belongs to the Thz kinase family. Mg(2+) is required as a cofactor.

It catalyses the reaction 5-(2-hydroxyethyl)-4-methylthiazole + ATP = 4-methyl-5-(2-phosphooxyethyl)-thiazole + ADP + H(+). Its pathway is cofactor biosynthesis; thiamine diphosphate biosynthesis; 4-methyl-5-(2-phosphoethyl)-thiazole from 5-(2-hydroxyethyl)-4-methylthiazole: step 1/1. In terms of biological role, catalyzes the phosphorylation of the hydroxyl group of 4-methyl-5-beta-hydroxyethylthiazole (THZ). The polypeptide is Hydroxyethylthiazole kinase (Exiguobacterium sp. (strain ATCC BAA-1283 / AT1b)).